We begin with the raw amino-acid sequence, 127 residues long: Interacting with cytoskeleton protein 1 (127 aa).

Its subcellular location is the vacuole membrane. In terms of biological role, required for viability of cells lacking mtDNA. This is Interacting with cytoskeleton protein 1 (ICY1) from Saccharomyces cerevisiae (strain ATCC 204508 / S288c) (Baker's yeast).